The chain runs to 208 residues: RNA chaperone ProQ (208 aa).

Composition is skewed to basic and acidic residues over residues 99 to 115 (AQET…EKNK) and 126 to 135 (PAKDKPENTA). Positions 99-149 (AQETLKESKAKVAEKNKATNKAAAKKAPAKDKPENTAKAKPKTAKKPAKPK) are disordered. The span at 137 to 149 (AKPKTAKKPAKPK) shows a compositional bias: basic residues.

Belongs to the ProQ family.

The protein localises to the cytoplasm. RNA chaperone with significant RNA binding, RNA strand exchange and RNA duplexing activities. The sequence is that of RNA chaperone ProQ from Idiomarina loihiensis (strain ATCC BAA-735 / DSM 15497 / L2-TR).